Reading from the N-terminus, the 82-residue chain is UPF0154 protein SPD_1662 (82 aa).

A helical transmembrane segment spans residues 5 to 25; that stretch reads LAIVLIVLAFLGGALGGMYLV.

It belongs to the UPF0154 family.

It localises to the cell membrane. The polypeptide is UPF0154 protein SPD_1662 (Streptococcus pneumoniae serotype 2 (strain D39 / NCTC 7466)).